A 617-amino-acid chain; its full sequence is MVTPWRLSVRVCLSHLRCFEFRKELGHSRPLGCSRNARLCWFLLGTLPKLISAHGSVGEGAPGSLCQRKTHWSDLAENGLVEKVAQEGPLARVLLCLRLGLRAGVLLAKFFPLLFLYPLTYLAPGLSTLWLHLLFKATETSGPTYIKLGQWASTRRDLFSEAFCTQFSKLHVQVTPHPWARTEYLLQQAFGEDWGSLLFFETREPVGSGCVAQVYKAFASISLLEEDRIWRLGELSAPGTRAVVMQREPFMKDRKPSENLADEAFLEKLLLPKADLGGSEVGVSQAPWHLPKSDHLIPVAVKVLHPGLLSQVSMDLLLMKIGSKALGLLPGVKWLSLPEIVEEFEKLMVQQTDLRYEAQNLEHFQHNFQDMASVKFPTPLRPLITRDILVETYEESVPVSSYQQAGIPTDLKRKIAQLGINMLLKMIFVDNFVHGDLHPGNILVQGADGVSPSLEMQQQQVNVCDTLVATIAPALCPLRLVLLDAGIVAKLQASDLRNFRAVFQAVVMGQGHRVAELMLHHAQANECRDVERFKAEMATLVTQARKNIVTLEKLHVSSLLSSVFKLLMTHKVKLESNFASIVVAIMVLEGLGRSLDPTLDILEAAKPFLFKGPASFL.

Residues 103–123 (AGVLLAKFFPLLFLYPLTYLA) traverse the membrane as a helical segment. A Protein kinase domain is found at 200–609 (FETREPVGSG…DILEAAKPFL (410 aa)). Residues 206–214 (VGSGCVAQV) and lysine 302 each bind ATP. The Proton acceptor role is filled by aspartate 436.

The protein belongs to the protein kinase superfamily. ADCK protein kinase family.

It localises to the mitochondrion. The protein resides in the membrane. The function of this protein is not yet clear. It is not known if it has protein kinase activity and what type of substrate it would phosphorylate (Ser, Thr or Tyr). Involved in the mitochondrial import of CoQ precursors, plays a role in muscle mitochondrial function and fatty acid beta-oxidation. This is an uncharacterized protein from Mus musculus (Mouse).